Reading from the N-terminus, the 94-residue chain is Probable Fe(2+)-trafficking protein (94 aa).

Belongs to the Fe(2+)-trafficking protein family.

Functionally, could be a mediator in iron transactions between iron acquisition and iron-requiring processes, such as synthesis and/or repair of Fe-S clusters in biosynthetic enzymes. This Haemophilus ducreyi (strain 35000HP / ATCC 700724) protein is Probable Fe(2+)-trafficking protein.